Here is a 190-residue protein sequence, read N- to C-terminus: Lipid A acyltransferase PagP (190 aa).

The N-terminal stretch at 1–29 is a signal peptide; that stretch reads MYVAMIIRKYFLIIALLLMPWLAIPSVSA. Residues His-62, Asp-105, and Ser-106 contribute to the active site.

The protein belongs to the lipid A palmitoyltransferase family. Homodimer.

The protein localises to the cell outer membrane. The catalysed reaction is a lipid A + a 1,2-diacyl-sn-glycero-3-phosphocholine = a hepta-acyl lipid A + a 2-acyl-sn-glycero-3-phosphocholine. It catalyses the reaction a lipid IVA + a 1,2-diacyl-sn-glycero-3-phosphocholine = a lipid IVB + a 2-acyl-sn-glycero-3-phosphocholine. The enzyme catalyses a lipid IIA + a 1,2-diacyl-sn-glycero-3-phosphocholine = a lipid IIB + a 2-acyl-sn-glycero-3-phosphocholine. In terms of biological role, transfers a fatty acid residue from the sn-1 position of a phospholipid to the N-linked hydroxyfatty acid chain on the proximal unit of lipid A or its precursors. Required for resistance to cationic antimicrobial peptides (CAMPs). Modifications of lipid A with an acyl chain allow to evade host immune defenses by resisting antimicrobial peptides and attenuating the inflammatory response to infection triggered by lipopolysaccharide through the Toll-like receptor 4 (TLR4) signal transduction pathway. In Salmonella typhimurium (strain LT2 / SGSC1412 / ATCC 700720), this protein is Lipid A acyltransferase PagP.